Here is a 281-residue protein sequence, read N- to C-terminus: Probable endonuclease 4 (281 aa).

Zn(2+) is bound by residues His69, His109, Glu145, Asp179, His182, His216, Asp229, His231, and Glu261.

The protein belongs to the AP endonuclease 2 family. Zn(2+) serves as cofactor.

The enzyme catalyses Endonucleolytic cleavage to 5'-phosphooligonucleotide end-products.. Functionally, endonuclease IV plays a role in DNA repair. It cleaves phosphodiester bonds at apurinic or apyrimidinic (AP) sites, generating a 3'-hydroxyl group and a 5'-terminal sugar phosphate. The protein is Probable endonuclease 4 of Chlorobaculum parvum (strain DSM 263 / NCIMB 8327) (Chlorobium vibrioforme subsp. thiosulfatophilum).